Consider the following 143-residue polypeptide: Large ribosomal subunit protein uL11 (143 aa).

Belongs to the universal ribosomal protein uL11 family. As to quaternary structure, part of the ribosomal stalk of the 50S ribosomal subunit. Interacts with L10 and the large rRNA to form the base of the stalk. L10 forms an elongated spine to which L12 dimers bind in a sequential fashion forming a multimeric L10(L12)X complex. In terms of processing, one or more lysine residues are methylated.

Functionally, forms part of the ribosomal stalk which helps the ribosome interact with GTP-bound translation factors. The sequence is that of Large ribosomal subunit protein uL11 from Ralstonia pickettii (strain 12J).